The following is a 271-amino-acid chain: Phosphate import ATP-binding protein PstB 2 (271 aa).

The ABC transporter domain occupies 25–266; that stretch reads MATEDLHVYY…PQQKQTEDYI (242 aa). Position 57–64 (57–64) interacts with ATP; the sequence is GPSGCGKS.

This sequence belongs to the ABC transporter superfamily. Phosphate importer (TC 3.A.1.7) family. In terms of assembly, the complex is composed of two ATP-binding proteins (PstB), two transmembrane proteins (PstC and PstA) and a solute-binding protein (PstS).

It is found in the cell membrane. It catalyses the reaction phosphate(out) + ATP + H2O = ADP + 2 phosphate(in) + H(+). Part of the ABC transporter complex PstSACB involved in phosphate import. Responsible for energy coupling to the transport system. This chain is Phosphate import ATP-binding protein PstB 2, found in Listeria monocytogenes serotype 4b (strain F2365).